The chain runs to 689 residues: Glycine--tRNA ligase beta subunit (689 aa).

It belongs to the class-II aminoacyl-tRNA synthetase family. As to quaternary structure, tetramer of two alpha and two beta subunits.

Its subcellular location is the cytoplasm. The catalysed reaction is tRNA(Gly) + glycine + ATP = glycyl-tRNA(Gly) + AMP + diphosphate. This Salmonella schwarzengrund (strain CVM19633) protein is Glycine--tRNA ligase beta subunit.